We begin with the raw amino-acid sequence, 493 residues long: MSLLKMEYNLYAELKKMTCGQPISLFNEDGDFVEVEPGSSFKFLIPKGFYSSPSVKTSLVFETLTTTDNKITSINPINAPKLYPLQRKVVSEVVSNMRKMIELKRPLYITLHLACGFGKTITTCYLMATHGRKTIICVPNKMLIHQWKTLVEAVGLEHKISIDGVSSLLKELKTQSPDVLIVVSRHLTNDAFCKYINKHYDLFILDESHTYNLMNNTAVTRFLAYYPPMMCYFLTATPRPANRIYCNSIINIAKLSDLKKTIYVVDSFFDPYSTDNIRHMIKRLDGPSNKYHIYTEKLLSVDEPRNQLILDTLVEEFKSGTINRILVITKLREHMVMFYKRLLDLFGPEVVFIGDAQNRRTPDMVKSIKELNRFIFVSTLFYSGTGLDIPSLDSLFICSAVINNMQIEQLLGRVCRETELLDRTVYVFPSTSIKEIKYMIGNFVQRIISLSVDKLGFKQESYRKHQESDPTSTCTTSSREERVLNRIFNSQNR.

Positions 100–256 constitute a Helicase ATP-binding domain; sequence MIELKRPLYI…NSIINIAKLS (157 aa). Residue 113–120 coordinates ATP; sequence LACGFGKT. The short motif at 206-209 is the DESH box element; that stretch reads DESH. Residues 309–456 form the Helicase C-terminal domain; it reads ILDTLVEEFK…IISLSVDKLG (148 aa).

The protein belongs to the helicase family. Poxviruses subfamily. Interacts with G2. Might be part of a transcription complex composed at least of G2, A18, and H5.

The protein resides in the virion. DNA helicase which seems to act as a postreplicative transcription termination factor. Involved in ATP-dependent release of nascent RNA. Forms a stable complex with single-stranded DNA, and to a lesser extent RNA. The chain is Transcript termination protein A18 from Mus musculus (Mouse).